A 239-amino-acid chain; its full sequence is Small ribosomal subunit protein uS2c (239 aa).

This sequence belongs to the universal ribosomal protein uS2 family.

The protein localises to the plastid. This is Small ribosomal subunit protein uS2c (rps2) from Aneura mirabilis (Parasitic liverwort).